A 269-amino-acid chain; its full sequence is Expansin-B9 (269 aa).

The N-terminal stretch at 1 to 24 (MGSLTTNIVLAVAVVAALVGGGSC) is a signal peptide. Asn34 is a glycosylation site (N-linked (GlcNAc...) asparagine). The 107-residue stretch at 63-169 (GGACGIKNVN…RRVRCKYPGG (107 aa)) folds into the Expansin-like EG45 domain. Cystine bridges form between Cys66–Cys94, Cys97–Cys164, and Cys102–Cys108. Residues 183–264 (NYLAVLVKFV…NWMPDAIYVS (82 aa)) enclose the Expansin-like CBD domain.

It belongs to the expansin family. Expansin B subfamily.

It is found in the secreted. It localises to the cell wall. The protein localises to the membrane. May cause loosening and extension of plant cell walls by disrupting non-covalent bonding between cellulose microfibrils and matrix glucans. No enzymatic activity has been found. May be required for rapid internodal elongation in deepwater rice during submergence. This Oryza sativa subsp. japonica (Rice) protein is Expansin-B9 (EXPB9).